Reading from the N-terminus, the 436-residue chain is Gustatory receptor for sugar taste 61a (436 aa).

At 1–78 the chain is on the cytoplasmic side; sequence MSRTSDDIRK…PQDVKFKVRS (78 aa). Residues 79–99 form a helical membrane-spanning segment; sequence IGLAVTGLFLLLGGMKTLVGA. Residues 100–111 lie on the Extracellular side of the membrane; sequence NILFTEGLNAKN. A helical transmembrane segment spans residues 112 to 132; sequence IVGLVFLIVGMVNWLNFVGFA. Residues 133-164 are Cytoplasmic-facing; the sequence is RSWSHIMLPWSSVDILMLFPPYKRGKRSLRSK. A helical membrane pass occupies residues 165–185; it reads VNVLALSVVVLAVGDHMLYYA. Residues 186-214 lie on the Extracellular side of the membrane; the sequence is SGYCSYSMHILQCHTNHSRITFGLYLEKE. N-linked (GlcNAc...) asparagine glycosylation is present at Asn-201. The chain crosses the membrane as a helical span at residues 215 to 235; it reads FSDIMFIMPFNIFSMCYGFWL. At 236–237 the chain is on the cytoplasmic side; the sequence is NG. The chain crosses the membrane as a helical span at residues 238–258; that stretch reads AFTFLWNFMDIFIVMTSIGLA. Over 259 to 304 the chain is Extracellular; that stretch reads QRFQQFAARVGALEGRHVPEALWYDIRRDHIRLCELASLVEASMSN. Residues 305–325 traverse the membrane as a helical segment; sequence IVFVSCANNVYVICNQALAIF. Residues 326-334 lie on the Cytoplasmic side of the membrane; it reads TKLRHPINY. The helical transmembrane segment at 335–355 threads the bilayer; it reads VYFWYSLIFLLARTSLVFMTA. Residues 356–436 are Extracellular-facing; the sequence is SKIHDASLLP…AKSHKGLRCA (81 aa).

It belongs to the insect chemoreceptor superfamily. Gustatory receptor (GR) family. Gr5a subfamily. As to expression, expressed in sweet sensing neurons of classical chemosensory sensilla, but also in two supersensitive neurons of atypical taste sensilla.

The protein localises to the cell membrane. One of the few identified sugar gustatory receptors identified so far with glucose being its primary ligand and which mediates acceptance behavior. The polypeptide is Gustatory receptor for sugar taste 61a (Gr61a) (Drosophila melanogaster (Fruit fly)).